A 214-amino-acid polypeptide reads, in one-letter code: Putative glucose-6-phosphate isomerase 1 (214 aa).

Residues H92, H94, E101, and H140 each coordinate Fe cation.

The protein belongs to the archaeal-type GPI family. Homodimer. Requires Fe cation as cofactor.

It is found in the cytoplasm. The enzyme catalyses alpha-D-glucose 6-phosphate = beta-D-fructose 6-phosphate. Its pathway is carbohydrate degradation; glycolysis; D-glyceraldehyde 3-phosphate and glycerone phosphate from D-glucose: step 2/4. This Rhizobium meliloti (strain 1021) (Ensifer meliloti) protein is Putative glucose-6-phosphate isomerase 1 (pgiA1).